The chain runs to 135 residues: MRLFIIDTVATVIFFTAVATFSELLIAGMAPSEVLATRLLMVPVMVLTGRPYTRWRDWLVRRTAPRNRWSAFLTDILAFLSFQAPVYGATLLIAGASFAEAGTAIGSAIILMILLARPFGLFVEWTRSLFGVELS.

Transmembrane regions (helical) follow at residues valine 9–methionine 29, aspartate 75–glycine 95, and alanine 96–alanine 116.

This sequence belongs to the AlaE exporter family.

Its subcellular location is the cell inner membrane. Its function is as follows. Exports L-alanine. The protein is L-alanine exporter AlaE of Cereibacter sphaeroides (strain ATCC 17023 / DSM 158 / JCM 6121 / CCUG 31486 / LMG 2827 / NBRC 12203 / NCIMB 8253 / ATH 2.4.1.) (Rhodobacter sphaeroides).